A 255-amino-acid polypeptide reads, in one-letter code: Hydroxyacylglutathione hydrolase (255 aa).

Zn(2+) contacts are provided by histidine 56, histidine 58, aspartate 60, histidine 61, histidine 114, aspartate 133, and histidine 171.

This sequence belongs to the metallo-beta-lactamase superfamily. Glyoxalase II family. Monomer. The cofactor is Zn(2+).

It catalyses the reaction an S-(2-hydroxyacyl)glutathione + H2O = a 2-hydroxy carboxylate + glutathione + H(+). It participates in secondary metabolite metabolism; methylglyoxal degradation; (R)-lactate from methylglyoxal: step 2/2. Functionally, thiolesterase that catalyzes the hydrolysis of S-D-lactoyl-glutathione to form glutathione and D-lactic acid. This Fuscovulum blasticum (Rhodobacter blasticus) protein is Hydroxyacylglutathione hydrolase.